The sequence spans 200 residues: Lipopolysaccharide core heptose(II)-phosphate phosphatase (200 aa).

A signal peptide spans 1–25 (MLAFCRSSLKSKKYFIILLALAAIA).

Belongs to the phosphoglycerate mutase family. Ais subfamily.

The protein localises to the periplasm. It functions in the pathway bacterial outer membrane biogenesis; lipopolysaccharide metabolism. Functionally, catalyzes the dephosphorylation of heptose(II) of the outer membrane lipopolysaccharide core. In Escherichia coli O7:K1 (strain IAI39 / ExPEC), this protein is Lipopolysaccharide core heptose(II)-phosphate phosphatase.